The sequence spans 247 residues: OCIA domain-containing protein 1 (247 aa).

Residues 1 to 112 form the OCIA domain; it reads MNGRADFREP…KKLENSPLGE (112 aa). Phosphoserine occurs at positions 108, 116, and 123. 2 disordered regions span residues 113–153 and 167–230; these read ALRS…ADNI and SASM…MQER. 2 stretches are compositionally biased toward polar residues: residues 136–146 and 168–177; these read SNVSGQSSFGT and ASMNESTPTG. 2 stretches are compositionally biased toward basic and acidic residues: residues 192 to 210 and 218 to 230; these read ESPK…KNRE and HKTD…MQER. A Phosphoserine modification is found at Ser-193.

This sequence belongs to the OCIAD1 family. Interacts with OCIAD2. Interacts with STAT3. As to expression, expressed at high levels in the brain and at lower levels in the heart, ovary, testis and kidney. Expression is strongest in embryonic stem cells and in the blood vessels.

It localises to the endosome. Maintains stem cell potency. Increases STAT3 phosphorylation and controls ERK phosphorylation. May act as a scaffold, increasing STAT3 recruitment onto endosomes. This chain is OCIA domain-containing protein 1, found in Mus musculus (Mouse).